The sequence spans 179 residues: GTP-dependent dephospho-CoA kinase (179 aa).

Residues Asp55, Val57, Asp74, Lys76, and Glu128 each coordinate GTP.

It belongs to the GTP-dependent DPCK family.

It carries out the reaction 3'-dephospho-CoA + GTP = GDP + CoA + H(+). The protein operates within cofactor biosynthesis; coenzyme A biosynthesis. Catalyzes the GTP-dependent phosphorylation of the 3'-hydroxyl group of dephosphocoenzyme A to form coenzyme A (CoA). The chain is GTP-dependent dephospho-CoA kinase from Saccharolobus solfataricus (strain ATCC 35092 / DSM 1617 / JCM 11322 / P2) (Sulfolobus solfataricus).